A 265-amino-acid polypeptide reads, in one-letter code: Zinc transporter ZupT (265 aa).

8 helical membrane passes run 6–26 (IAFAFSLVLLSGLSTSIGGAL), 37–57 (FMAAALGLSAGVMLYVSFMEI), 77–97 (WTMMGAFFAGIAIITIIDRLV), 122–142 (GMFTAFALAIHNFPEGFATFL), 150–170 (IAIPVAVAIAIHNIPEGIAVA), 184–204 (FWWATLSGLAEPLGALIGFAL), 208–228 (FIGPMTFGISFAVIAGIMVFI), and 245–265 (CAIYGLIAGMAVMAVSLALFI). The Fe(2+) site is built by N133 and E136. Residues E136 and H161 each coordinate Zn(2+). Fe(2+) is bound by residues N162, E165, and E194. E165 serves as a coordination point for Zn(2+).

Belongs to the ZIP transporter (TC 2.A.5) family. ZupT subfamily.

The protein resides in the cell membrane. It carries out the reaction Zn(2+)(in) = Zn(2+)(out). Its function is as follows. Mediates zinc uptake. May also transport other divalent cations. The chain is Zinc transporter ZupT from Corynebacterium aurimucosum (strain ATCC 700975 / DSM 44827 / CIP 107346 / CN-1) (Corynebacterium nigricans).